The sequence spans 453 residues: uncharacterized protein (453 aa).

It to B.subtilis YcdB.

This is an uncharacterized protein from Bacillus subtilis (strain 168).